The primary structure comprises 284 residues: Bifunctional protein FolD (284 aa).

NADP(+)-binding positions include 165 to 167 (GRS), Ser-190, and Ile-231.

Belongs to the tetrahydrofolate dehydrogenase/cyclohydrolase family. Homodimer.

It carries out the reaction (6R)-5,10-methylene-5,6,7,8-tetrahydrofolate + NADP(+) = (6R)-5,10-methenyltetrahydrofolate + NADPH. The catalysed reaction is (6R)-5,10-methenyltetrahydrofolate + H2O = (6R)-10-formyltetrahydrofolate + H(+). The protein operates within one-carbon metabolism; tetrahydrofolate interconversion. Catalyzes the oxidation of 5,10-methylenetetrahydrofolate to 5,10-methenyltetrahydrofolate and then the hydrolysis of 5,10-methenyltetrahydrofolate to 10-formyltetrahydrofolate. The protein is Bifunctional protein FolD of Dechloromonas aromatica (strain RCB).